A 356-amino-acid polypeptide reads, in one-letter code: Glycerol-1-phosphate dehydrogenase [NAD(P)+] (356 aa).

NAD(+) is bound by residues 103–107 and 125–128; these read GRSID and TAAS. Residue aspartate 130 coordinates substrate. Serine 134 contacts NAD(+). Aspartate 177 lines the substrate pocket. Residues aspartate 177 and histidine 257 each coordinate Zn(2+). Histidine 261 lines the substrate pocket. Histidine 273 is a binding site for Zn(2+).

The protein belongs to the glycerol-1-phosphate dehydrogenase family. Requires Zn(2+) as cofactor.

Its subcellular location is the cytoplasm. It catalyses the reaction sn-glycerol 1-phosphate + NAD(+) = dihydroxyacetone phosphate + NADH + H(+). It carries out the reaction sn-glycerol 1-phosphate + NADP(+) = dihydroxyacetone phosphate + NADPH + H(+). Its pathway is membrane lipid metabolism; glycerophospholipid metabolism. In terms of biological role, catalyzes the NAD(P)H-dependent reduction of dihydroxyacetonephosphate (DHAP or glycerone phosphate) to glycerol 1-phosphate (G1P). The G1P thus generated is used as the glycerophosphate backbone of phospholipids in the cellular membranes of Archaea. In Methanosarcina mazei (strain ATCC BAA-159 / DSM 3647 / Goe1 / Go1 / JCM 11833 / OCM 88) (Methanosarcina frisia), this protein is Glycerol-1-phosphate dehydrogenase [NAD(P)+].